A 274-amino-acid chain; its full sequence is Diaminopimelate epimerase (274 aa).

Positions 11, 44, and 64 each coordinate substrate. C73 acts as the Proton donor in catalysis. Substrate contacts are provided by residues 74–75, N157, N190, and 208–209; these read GN and ER. C217 (proton acceptor) is an active-site residue. A substrate-binding site is contributed by 218-219; it reads GS.

This sequence belongs to the diaminopimelate epimerase family. As to quaternary structure, homodimer.

It localises to the cytoplasm. It carries out the reaction (2S,6S)-2,6-diaminopimelate = meso-2,6-diaminopimelate. Its pathway is amino-acid biosynthesis; L-lysine biosynthesis via DAP pathway; DL-2,6-diaminopimelate from LL-2,6-diaminopimelate: step 1/1. Its function is as follows. Catalyzes the stereoinversion of LL-2,6-diaminopimelate (L,L-DAP) to meso-diaminopimelate (meso-DAP), a precursor of L-lysine and an essential component of the bacterial peptidoglycan. The chain is Diaminopimelate epimerase from Pectobacterium carotovorum subsp. carotovorum (strain PC1).